The following is an 84-amino-acid chain: Defensin-like protein 49 (84 aa).

Residues 1-29 (MGITKSLMIFFHIVLLAVSLSNNIILTSG) form the signal peptide. Cystine bridges form between C40–C82, C44–C68, C54–C80, and C58–C81.

Belongs to the DEFL family.

Its subcellular location is the secreted. This Arabidopsis thaliana (Mouse-ear cress) protein is Defensin-like protein 49.